The sequence spans 85 residues: Large ribosomal subunit protein bL27 (85 aa).

Belongs to the bacterial ribosomal protein bL27 family.

This is Large ribosomal subunit protein bL27 from Vesicomyosocius okutanii subsp. Calyptogena okutanii (strain HA).